Here is a 507-residue protein sequence, read N- to C-terminus: Putative pentatricopeptide repeat-containing protein At3g16710, mitochondrial (507 aa).

The transit peptide at 1–48 directs the protein to the mitochondrion; it reads MRRSIATGFASIVKGFHLHSHRHRLQISNPRTAASLSLCGFCFWIRAF. PPR repeat units lie at residues 47–81, 82–116, 117–151, 152–186, 187–221, 222–256, 257–291, 292–326, 327–361, 362–396, 397–431, 432–466, and 467–501; these read AFSS…RPLP, SIID…GIPP, LLCT…GFEP, DLVT…GFKP, NVVT…GSRP, NVVT…RIEP, NVIT…SVYP, DVFT…GCYP, NEVI…GVVA, NTIT…RAPP, DIRT…EMDI, NIVT…GMKP, and NVIT…GFLP.

This sequence belongs to the PPR family. P subfamily.

It localises to the mitochondrion. This chain is Putative pentatricopeptide repeat-containing protein At3g16710, mitochondrial, found in Arabidopsis thaliana (Mouse-ear cress).